The primary structure comprises 402 residues: MSLEGIGFGYRERAPYACDPARSRGRLVPEPESPTRTPFQRDRDRIIHSTAFRRLKHKTQVFIAHEGDHYRTRLTHTIEVAQIARALARALRLDEDLAEAVALVHDFGHTPFGHTGEEALNDRMKAFGGFDHNAQSLRIVTKLEHRYADFDGLNLSWETLEGLVKHNGPLLGAHAAHPDAAVPLPILDFNERYDLELTRFASLEAQCAAIADDIAYNAHDIDDGLRAGLLSLDALDEVPLTKRLLDLVRTRYPDLDPVRTGHELVRRQITIMVEDVIEEAQRRLAAAKPQSVEDVHGQSHALVAFSDTMRTDEKVLKRFLFKNLYFHDSVVVRRHAADKILQDLFDTCFANPSIMPSEWQSGCETLDEAARARRVADYLAGMTDNYAVREHRRLFDHTPDLA.

Positions 73 to 217 (RLTHTIEVAQ…AAIADDIAYN (145 aa)) constitute an HD domain.

This sequence belongs to the dGTPase family. Type 2 subfamily.

This Brucella anthropi (strain ATCC 49188 / DSM 6882 / CCUG 24695 / JCM 21032 / LMG 3331 / NBRC 15819 / NCTC 12168 / Alc 37) (Ochrobactrum anthropi) protein is Deoxyguanosinetriphosphate triphosphohydrolase-like protein.